A 224-amino-acid chain; its full sequence is uncharacterized protein (224 aa).

This is an uncharacterized protein from Mycobacterium tuberculosis (strain CDC 1551 / Oshkosh).